Reading from the N-terminus, the 338-residue chain is tRNA N6-adenosine threonylcarbamoyltransferase (338 aa).

Fe cation contacts are provided by His111 and His115. Residues Leu134–Gly138, Asp167, Gly180, and Asn272 each bind substrate. Position 300 (Asp300) interacts with Fe cation.

It belongs to the KAE1 / TsaD family. The cofactor is Fe(2+).

The protein resides in the cytoplasm. The enzyme catalyses L-threonylcarbamoyladenylate + adenosine(37) in tRNA = N(6)-L-threonylcarbamoyladenosine(37) in tRNA + AMP + H(+). Functionally, required for the formation of a threonylcarbamoyl group on adenosine at position 37 (t(6)A37) in tRNAs that read codons beginning with adenine. Is involved in the transfer of the threonylcarbamoyl moiety of threonylcarbamoyl-AMP (TC-AMP) to the N6 group of A37, together with TsaE and TsaB. TsaD likely plays a direct catalytic role in this reaction. The chain is tRNA N6-adenosine threonylcarbamoyltransferase from Vibrio atlanticus (strain LGP32) (Vibrio splendidus (strain Mel32)).